The following is a 113-amino-acid chain: Phosphoribosyl-ATP pyrophosphatase (113 aa).

Belongs to the PRA-PH family.

The protein localises to the cytoplasm. The catalysed reaction is 1-(5-phospho-beta-D-ribosyl)-ATP + H2O = 1-(5-phospho-beta-D-ribosyl)-5'-AMP + diphosphate + H(+). It participates in amino-acid biosynthesis; L-histidine biosynthesis; L-histidine from 5-phospho-alpha-D-ribose 1-diphosphate: step 2/9. This Hydrogenovibrio crunogenus (strain DSM 25203 / XCL-2) (Thiomicrospira crunogena) protein is Phosphoribosyl-ATP pyrophosphatase.